We begin with the raw amino-acid sequence, 312 residues long: MPSKKSGPQPHKRWVFTLNNPSEEEKNKIRELPISLFDYFVCGEEGLEEGRTPHLQGFANFAKKQTFNKVKWYFGARCHIEKAKGTDQQNKEYCSKEGHILIECGAPRNQGKRSDLSTAVSTLLETGSLVTVAEQFPVTYVRNFRGLAELLKVSGKMQQRDWKTAVHVIVGPPGCGKSQWARNFAEPSDTYWKPSRNKWWDGYHGEEVVVLDDFYGWLPWDDLLRLCDRYPLTVETKGGTVPFLARSILITSNQAPQEWYSSTAVPAVEALYRRITTLQFWKTAGEQSTEVPEGRFEAVDPPCALFPYKINY.

The short motif at 4-15 is the Nuclear localization signal element; sequence KKSGPQPHKRWV. The region spanning 8-107 is the CRESS-DNA virus Rep endonuclease domain; the sequence is PQPHKRWVFT…GHILIECGAP (100 aa). Positions 15–18 match the RCR-1 motif; sequence VFTL. Positions 45 and 54 each coordinate a divalent metal cation. The RCR-2 motif lies at 54 to 56; it reads HLQ. Tyr-93 serves as the catalytic For DNA cleavage activity. The RCR-3 signature appears at 93–96; sequence YCSK. A divalent metal cation is bound at residue Glu-97. 171-178 contacts ATP; the sequence is GPPGCGKS.

The protein belongs to the nanoviruses/circoviruses replication-associated protein family. Interacts with the capsid protein; this interaction relocates Rep into the nucleus. It depends on Mg(2+) as a cofactor. Requires Mn(2+) as cofactor.

The protein resides in the host nucleus. It catalyses the reaction ATP + H2O = ADP + phosphate + H(+). In terms of biological role, essential for the replication of viral ssDNA. The closed circular ssDNA genome is first converted to a superhelical dsDNA. Rep and/or Rep' binds a specific hairpin at the genome origin of replication. Introduces an endonucleolytic nick within the conserved sequence 5'-AGTATTAC-3' in the intergenic region of the genome, thereby initiating the rolling circle replication (RCR). Following cleavage, binds covalently to the 5'-phosphate of DNA as a tyrosyl ester. The cleavage gives rise to a free 3'-OH that serves as a primer for the cellular DNA polymerase. The polymerase synthesizes the (+) strand DNA by rolling circle mechanism. After one round of replication, a Rep-catalyzed nucleotidyl transfer reaction releases a circular single-stranded virus genome, thereby terminating the replication. Displays origin-specific DNA cleavage, and nucleotidyl transferase. The protein is Replication-associated protein (Rep) of Sus scrofa (Pig).